A 327-amino-acid polypeptide reads, in one-letter code: Spermidine/putrescine import ATP-binding protein PotA (327 aa).

One can recognise an ABC transporter domain in the interval 5-235 (IKVEAVEKHF…PKTLFVATFI (231 aa)). An ATP-binding site is contributed by 37 to 44 (GPSGCGKT).

It belongs to the ABC transporter superfamily. Spermidine/putrescine importer (TC 3.A.1.11.1) family. As to quaternary structure, the complex is composed of two ATP-binding proteins (PotA), two transmembrane proteins (PotB and PotC) and a solute-binding protein (PotD).

The protein localises to the cell membrane. The catalysed reaction is ATP + H2O + polyamine-[polyamine-binding protein]Side 1 = ADP + phosphate + polyamineSide 2 + [polyamine-binding protein]Side 1.. Functionally, part of the ABC transporter complex PotABCD involved in spermidine/putrescine import. Responsible for energy coupling to the transport system. The sequence is that of Spermidine/putrescine import ATP-binding protein PotA from Bacillus anthracis.